Reading from the N-terminus, the 364-residue chain is Probable dual-specificity RNA methyltransferase RlmN (364 aa).

Glu107 functions as the Proton acceptor in the catalytic mechanism. One can recognise a Radical SAM core domain in the interval 113–346 (HDYGNSVCVT…ATIRREQGSD (234 aa)). Cys120 and Cys351 are disulfide-bonded. Residues Cys127, Cys131, and Cys134 each coordinate [4Fe-4S] cluster. Residues 177–178 (GE), Ser209, 232–234 (SLH), and Asn308 each bind S-adenosyl-L-methionine. Cys351 functions as the S-methylcysteine intermediate in the catalytic mechanism.

Belongs to the radical SAM superfamily. RlmN family. The cofactor is [4Fe-4S] cluster.

Its subcellular location is the cytoplasm. The enzyme catalyses adenosine(2503) in 23S rRNA + 2 reduced [2Fe-2S]-[ferredoxin] + 2 S-adenosyl-L-methionine = 2-methyladenosine(2503) in 23S rRNA + 5'-deoxyadenosine + L-methionine + 2 oxidized [2Fe-2S]-[ferredoxin] + S-adenosyl-L-homocysteine. It carries out the reaction adenosine(37) in tRNA + 2 reduced [2Fe-2S]-[ferredoxin] + 2 S-adenosyl-L-methionine = 2-methyladenosine(37) in tRNA + 5'-deoxyadenosine + L-methionine + 2 oxidized [2Fe-2S]-[ferredoxin] + S-adenosyl-L-homocysteine. Its function is as follows. Specifically methylates position 2 of adenine 2503 in 23S rRNA and position 2 of adenine 37 in tRNAs. Confers resistance to some classes of antibiotics. The chain is Probable dual-specificity RNA methyltransferase RlmN from Staphylococcus haemolyticus (strain JCSC1435).